Here is a 629-residue protein sequence, read N- to C-terminus: tRNA uridine 5-carboxymethylaminomethyl modification enzyme MnmG (629 aa).

13 to 18 (GGGHAG) contributes to the FAD binding site. 273-287 (GPRYCPSIEDKIHRF) provides a ligand contact to NAD(+).

The protein belongs to the MnmG family. As to quaternary structure, homodimer. Heterotetramer of two MnmE and two MnmG subunits. Requires FAD as cofactor.

Its subcellular location is the cytoplasm. NAD-binding protein involved in the addition of a carboxymethylaminomethyl (cmnm) group at the wobble position (U34) of certain tRNAs, forming tRNA-cmnm(5)s(2)U34. This Shewanella baltica (strain OS223) protein is tRNA uridine 5-carboxymethylaminomethyl modification enzyme MnmG.